The primary structure comprises 1161 residues: Perforin-like protein 1 (1161 aa).

A helical transmembrane segment spans residues leucine 67–valine 86. Residues proline 154–phenylalanine 329 are disordered. Composition is skewed to basic and acidic residues over residues threonine 162–glutamate 177 and alanine 184–serine 194. Residues proline 201–aspartate 211 show a composition bias toward acidic residues. Residues asparagine 222–aspartate 234 are compositionally biased toward polar residues. Residues glycine 238–serine 249 show a composition bias toward low complexity. A glycan (N-linked (GlcNAc...) asparagine) is linked at asparagine 257. The span at asparagine 264–lysine 283 shows a compositional bias: basic residues. Positions asparagine 309–aspartate 322 are enriched in polar residues. N-linked (GlcNAc...) asparagine glycosylation is present at asparagine 344. Residues alanine 353 to serine 381 form a disordered region. Residues serine 361–proline 378 show a composition bias toward polar residues. An MACPF domain is found at leucine 463–threonine 817. A disulfide bond links cysteine 539 and cysteine 602. Residue asparagine 550 is glycosylated (N-linked (GlcNAc...) asparagine). A beta stranded membrane pass occupies residues tyrosine 554–serine 589. N-linked (GlcNAc...) asparagine glycosylation occurs at asparagine 618. Cysteine 643 and cysteine 657 are disulfide-bonded. The beta stranded transmembrane segment at arginine 694–asparagine 740 threads the bilayer. The segment at glycine 716–glutamate 736 is disordered. N-linked (GlcNAc...) asparagine glycosylation is present at asparagine 755. 6 disulfide bridges follow: cysteine 845–cysteine 900, cysteine 874–cysteine 881, cysteine 928–cysteine 981, cysteine 957–cysteine 964, cysteine 1019–cysteine 1080, and cysteine 1047–cysteine 1054. Residues asparagine 1022, asparagine 1050, and asparagine 1111 are each glycosylated (N-linked (GlcNAc...) asparagine). Positions valine 1094–serine 1149 are disordered. Residues glycine 1099 to asparagine 1111 show a composition bias toward basic residues.

This sequence belongs to the MPEG1 family. Homooligomer; forms a homooligomeric pore.

The protein resides in the parasitophorous vacuole membrane. The protein localises to the cytoplasmic vesicle. Its subcellular location is the secretory vesicle. It is found in the microneme membrane. In terms of biological role, pore-forming protein that promotes parasite exit from host cells: mediates formation of a pore in the parasitophorous vacuolar membrane, leading to membrane permeabilization, thereby facilitating parasite egress from host cells. May also form a pore in the host plasma membrane. Preferentially binds inner leaflet lipids, such as phosphatidylethanolamine (PE) or phosphatidylserine (PS). This is Perforin-like protein 1 from Toxoplasma gondii (strain ATCC 50861 / VEG).